The following is a 277-amino-acid chain: Nudix hydrolase 10 (277 aa).

A Nudix hydrolase domain is found at 97 to 235 (WIPEAESTIP…KNDLFKDIHH (139 aa)). Residues 142–163 (GVVDEGEEIFAAAIREVKEETG) carry the Nudix box motif. The Mg(2+) site is built by Glu-157 and Glu-161.

The protein belongs to the Nudix hydrolase family. The cofactor is Mg(2+). It depends on Mn(2+) as a cofactor. In terms of tissue distribution, expressed in roots, stems and, at lower level, leaves.

The enzyme catalyses ADP-D-ribose + H2O = D-ribose 5-phosphate + AMP + 2 H(+). It carries out the reaction NAD(+) + H2O = beta-nicotinamide D-ribonucleotide + AMP + 2 H(+). It catalyses the reaction NADH + H2O = reduced beta-nicotinamide D-ribonucleotide + AMP + 2 H(+). Functionally, may mediate the hydrolysis of some nucleoside diphosphate derivatives. In vitro, uses both ADP-ribose and NADH as substrates; however the relevance of such substrates in vivo is unclear. This Arabidopsis thaliana (Mouse-ear cress) protein is Nudix hydrolase 10 (NUDT10).